The chain runs to 180 residues: Inner membrane-spanning protein YciB (180 aa).

The next 5 helical transmembrane spans lie at 11–31, 52–72, 76–96, 121–141, and 149–169; these read ILFF…ALII, IIMG…NKVE, WKVT…QYGF, LAWA…SQYC, and FKSF…GIYV.

This sequence belongs to the YciB family.

The protein resides in the cell inner membrane. Plays a role in cell envelope biogenesis, maintenance of cell envelope integrity and membrane homeostasis. In Mannheimia succiniciproducens (strain KCTC 0769BP / MBEL55E), this protein is Inner membrane-spanning protein YciB.